The chain runs to 195 residues: MKKYIKEQIKKSFEIKQTIYENENLINKIEEVSKLCVALYRGDKKTILAGNGGSAADAQHIAAELVGRYGFDRPSIPSLALTTDTSCLTAIGNDYGYDNVFSRQLEGMGQAGDIFIGISTSGNSKNIINAFISAKKKGITTVALVGRDGGEMAKMADVALVVPSDSTPRIQESHILIGHIICDIIEKEIFGDGVN.

Residues 35 to 195 form the SIS domain; sequence LCVALYRGDK…EKEIFGDGVN (161 aa). Residue 51–53 participates in substrate binding; the sequence is NGG. Residues histidine 60 and glutamate 64 each coordinate Zn(2+). Substrate contacts are provided by residues glutamate 64, 93-94, 119-121, serine 124, and glutamine 171; these read ND and STS. The Zn(2+) site is built by glutamine 171 and histidine 179.

This sequence belongs to the SIS family. GmhA subfamily. Homotetramer. It depends on Zn(2+) as a cofactor.

It is found in the cytoplasm. It carries out the reaction 2 D-sedoheptulose 7-phosphate = D-glycero-alpha-D-manno-heptose 7-phosphate + D-glycero-beta-D-manno-heptose 7-phosphate. It functions in the pathway carbohydrate biosynthesis; D-glycero-D-manno-heptose 7-phosphate biosynthesis; D-glycero-alpha-D-manno-heptose 7-phosphate and D-glycero-beta-D-manno-heptose 7-phosphate from sedoheptulose 7-phosphate: step 1/1. Catalyzes the isomerization of sedoheptulose 7-phosphate in D-glycero-D-manno-heptose 7-phosphate. In Sulfurimonas denitrificans (strain ATCC 33889 / DSM 1251) (Thiomicrospira denitrificans (strain ATCC 33889 / DSM 1251)), this protein is Phosphoheptose isomerase.